Here is a 69-residue protein sequence, read N- to C-terminus: Small ribosomal subunit protein bS21 (69 aa).

This sequence belongs to the bacterial ribosomal protein bS21 family.

The sequence is that of Small ribosomal subunit protein bS21 (rpsU) from Treponema pallidum (strain Nichols).